A 63-amino-acid chain; its full sequence is Small ribosomal subunit protein bS21 (63 aa).

Positions Lys40–Ala52 are enriched in basic and acidic residues. The segment at Lys40–Tyr63 is disordered. Residues Arg53–Tyr63 are compositionally biased toward basic residues.

Belongs to the bacterial ribosomal protein bS21 family.

This chain is Small ribosomal subunit protein bS21, found in Limosilactobacillus reuteri (strain DSM 20016) (Lactobacillus reuteri).